Here is a 206-residue protein sequence, read N- to C-terminus: Platelet glycoprotein Ib beta chain (206 aa).

A signal peptide spans Met1–Gly25. 2 disulfide bridges follow: Cys26-Cys32 and Cys30-Cys39. In terms of domain architecture, LRRNT spans Pro27 to Val55. Topologically, residues Pro27 to Cys147 are extracellular. The LRR repeat unit spans residues Leu60–Thr83. N-linked (GlcNAc...) asparagine glycosylation occurs at Asn66. The 55-residue stretch at Asn89–Pro143 folds into the LRRCT domain. 2 disulfide bridges follow: Cys93-Cys118 and Cys95-Cys141. Residues Trp148–Leu172 traverse the membrane as a helical segment. Residues Cys173–Ser206 lie on the Cytoplasmic side of the membrane. Residue Ser191 is modified to Phosphoserine; by PKA. Position 193 is a phosphothreonine (Thr193).

Two GP-Ib beta are disulfide-linked to one GP-Ib alpha. GP-IX is complexed with the GP-Ib heterodimer via a non covalent linkage. Interacts with TRAF4. As to expression, expressed in heart and brain.

It localises to the membrane. Its function is as follows. Gp-Ib, a surface membrane protein of platelets, participates in the formation of platelet plugs by binding to von Willebrand factor, which is already bound to the subendothelium. This Homo sapiens (Human) protein is Platelet glycoprotein Ib beta chain (GP1BB).